A 117-amino-acid polypeptide reads, in one-letter code: Immunoglobulin heavy variable 3-30-3 (117 aa).

The signal sequence occupies residues 1–19; the sequence is MEFGLSWVFLVALLRGVQC. The residue at position 20 (Gln-20) is a Pyrrolidone carboxylic acid. The segment at 20 to 44 is framework-1; sequence QVQLVESGGGVVQPGRSLRLSCAAS. The Ig-like domain occupies 20-117; the sequence is QVQLVESGGG…EDTAVYYCAR (98 aa). Residues Cys-41 and Cys-115 are joined by a disulfide bond. Residues 45–52 are complementarity-determining-1; the sequence is GFTFSSYA. A framework-2 region spans residues 53 to 69; it reads MHWVRQAPGKGLEWVAV. The segment at 70–77 is complementarity-determining-2; the sequence is ISYDGSNK. The interval 78 to 115 is framework-3; sequence YYADSVKGRFTISRDNSKNTLYLQMNSLRAEDTAVYYC. Positions 116–117 are complementarity-determining-3; the sequence is AR.

Immunoglobulins are composed of two identical heavy chains and two identical light chains; disulfide-linked.

It localises to the secreted. Its subcellular location is the cell membrane. V region of the variable domain of immunoglobulin heavy chains that participates in the antigen recognition. Immunoglobulins, also known as antibodies, are membrane-bound or secreted glycoproteins produced by B lymphocytes. In the recognition phase of humoral immunity, the membrane-bound immunoglobulins serve as receptors which, upon binding of a specific antigen, trigger the clonal expansion and differentiation of B lymphocytes into immunoglobulins-secreting plasma cells. Secreted immunoglobulins mediate the effector phase of humoral immunity, which results in the elimination of bound antigens. The antigen binding site is formed by the variable domain of one heavy chain, together with that of its associated light chain. Thus, each immunoglobulin has two antigen binding sites with remarkable affinity for a particular antigen. The variable domains are assembled by a process called V-(D)-J rearrangement and can then be subjected to somatic hypermutations which, after exposure to antigen and selection, allow affinity maturation for a particular antigen. The chain is Immunoglobulin heavy variable 3-30-3 from Homo sapiens (Human).